Consider the following 209-residue polypeptide: Orotate phosphoribosyltransferase (209 aa).

Residues Arg-96, Lys-100, His-102, and 122 to 130 (EDLISTGGS) contribute to the 5-phospho-alpha-D-ribose 1-diphosphate site. Ser-126 contributes to the orotate binding site.

Belongs to the purine/pyrimidine phosphoribosyltransferase family. PyrE subfamily. In terms of assembly, homodimer. The cofactor is Mg(2+).

The enzyme catalyses orotidine 5'-phosphate + diphosphate = orotate + 5-phospho-alpha-D-ribose 1-diphosphate. It participates in pyrimidine metabolism; UMP biosynthesis via de novo pathway; UMP from orotate: step 1/2. Catalyzes the transfer of a ribosyl phosphate group from 5-phosphoribose 1-diphosphate to orotate, leading to the formation of orotidine monophosphate (OMP). The chain is Orotate phosphoribosyltransferase from Streptococcus pyogenes serotype M3 (strain ATCC BAA-595 / MGAS315).